The primary structure comprises 105 residues: Pyruvate synthase subunit PorD (105 aa).

4Fe-4S ferredoxin-type domains lie at 44–73 (FKPE…LDEE) and 74–103 (GYPV…MVRE). Residues Cys-53, Cys-56, Cys-59, Cys-63, Cys-83, Cys-86, Cys-89, and Cys-93 each contribute to the [4Fe-4S] cluster site.

Heterotetramer of one alpha, one beta, one delta and one gamma chain. [4Fe-4S] cluster serves as cofactor.

The protein is Pyruvate synthase subunit PorD (porD) of Pyrococcus furiosus (strain ATCC 43587 / DSM 3638 / JCM 8422 / Vc1).